We begin with the raw amino-acid sequence, 750 residues long: MMIRSPEPEVKIVVDRDPVKTSFEEWARPGHFSRTIAKGPDTTTWIWNLHADAHDFDSHTGDLEEISRKVFSAHFGQLSIIFLWLSGMYFHGARFSNYEAWLSDPTHIGPSAQVVWPIVGQEILNGDVGGGFRGIQITSGFFQIWRASGITSELQLYCTAIGALIFASLMLFAGWFHYHKAAPKLAWFQDVESMLNHHLAGLLGLGSLSWAGHQIHVSLPINQFLDAGVDPKEIPLPHEFILNRDLLAQLYPSFAEGATPFFTLNWSKYAEFLSFRGGLDPITGGLWLSDIAHHHLAIAILFLIAGHMYRTNWGIGHGLKDILEAHKGPFTGQGHKGLYEILTTSWHAQLSLNLAMLGSTTIVVAHHMYSMPPYPYLATDYGTQLSLFTHHMWIGGFLIVGAAAHAAIFMVRDYDPTTRYNDLLDRVLRHRDAIISHLNWVCIFLGFHSFGLYIHNDTMSALGRPQDMFSDTAIQLQPIFAQWVQNLHAGAPSVTAPGATTSTSLTWGGGELVAVGGKVALLPIPLGTADFLVHHIHAFTIHVTVLILLKGVLFARSSRLIPDKANLGFRFPCDGPGRGGTCQVSAWDHVFLGLFWMYNSISVVIFHFSWKMQSDVWGTISDQGVVTHITGGNFAQSSITINGWLRDFLWAQASQVIQSYGSSLSAYGLFFLGAHFVWAFSLMFLFSGRGYWQELIESIVWAHNKLKVAPATQPRALSIIQGRAVGVTHYLLGGIATTWAFFLARIIAVG.

8 helical membrane-spanning segments follow: residues 70–93 (VFSAHFGQLSIIFLWLSGMYFHGA), 156–179 (LYCTAIGALIFASLMLFAGWFHYH), 195–219 (LNHHLAGLLGLGSLSWAGHQIHVSL), 291–309 (IAHHHLAIAILFLIAGHMY), 346–369 (WHAQLSLNLAMLGSTTIVVAHHMY), 385–411 (LSLFTHHMWIGGFLIVGAAAHAAIFMV), 433–455 (AIISHLNWVCIFLGFHSFGLYIH), and 531–549 (FLVHHIHAFTIHVTVLILL). Cys573 and Cys582 together coordinate [4Fe-4S] cluster. Transmembrane regions (helical) follow at residues 589–610 (HVFLGLFWMYNSISVVIFHFSW) and 664–686 (LSAYGLFFLGAHFVWAFSLMFLF). His675 contributes to the chlorophyll a' binding site. Chlorophyll a-binding residues include Met683 and Tyr691. Trp692 is a binding site for phylloquinone. A helical transmembrane segment spans residues 724 to 744 (AVGVTHYLLGGIATTWAFFLA).

The protein belongs to the PsaA/PsaB family. The PsaA/B heterodimer binds the P700 chlorophyll special pair and subsequent electron acceptors. PSI consists of a core antenna complex that captures photons, and an electron transfer chain that converts photonic excitation into a charge separation. The eukaryotic PSI reaction center is composed of at least 11 subunits. P700 is a chlorophyll a/chlorophyll a' dimer, A0 is one or more chlorophyll a, A1 is one or both phylloquinones and FX is a shared 4Fe-4S iron-sulfur center. serves as cofactor.

It is found in the plastid. The protein localises to the chloroplast thylakoid membrane. It catalyses the reaction reduced [plastocyanin] + hnu + oxidized [2Fe-2S]-[ferredoxin] = oxidized [plastocyanin] + reduced [2Fe-2S]-[ferredoxin]. PsaA and PsaB bind P700, the primary electron donor of photosystem I (PSI), as well as the electron acceptors A0, A1 and FX. PSI is a plastocyanin-ferredoxin oxidoreductase, converting photonic excitation into a charge separation, which transfers an electron from the donor P700 chlorophyll pair to the spectroscopically characterized acceptors A0, A1, FX, FA and FB in turn. Oxidized P700 is reduced on the lumenal side of the thylakoid membrane by plastocyanin. The chain is Photosystem I P700 chlorophyll a apoprotein A1 from Oryza nivara (Indian wild rice).